Consider the following 227-residue polypeptide: Uracil-DNA glycosylase (227 aa).

Aspartate 68 serves as the catalytic Proton acceptor.

It belongs to the uracil-DNA glycosylase (UDG) superfamily. UNG family.

Its subcellular location is the cytoplasm. It carries out the reaction Hydrolyzes single-stranded DNA or mismatched double-stranded DNA and polynucleotides, releasing free uracil.. In terms of biological role, excises uracil residues from the DNA which can arise as a result of misincorporation of dUMP residues by DNA polymerase or due to deamination of cytosine. In Mycobacterium sp. (strain JLS), this protein is Uracil-DNA glycosylase.